Here is a 263-residue protein sequence, read N- to C-terminus: Ribosomal RNA small subunit methyltransferase A (263 aa).

Residues asparagine 20, leucine 22, glycine 47, glutamate 68, aspartate 90, and asparagine 110 each coordinate S-adenosyl-L-methionine.

The protein belongs to the class I-like SAM-binding methyltransferase superfamily. rRNA adenine N(6)-methyltransferase family. RsmA subfamily.

The protein resides in the cytoplasm. The enzyme catalyses adenosine(1518)/adenosine(1519) in 16S rRNA + 4 S-adenosyl-L-methionine = N(6)-dimethyladenosine(1518)/N(6)-dimethyladenosine(1519) in 16S rRNA + 4 S-adenosyl-L-homocysteine + 4 H(+). In terms of biological role, specifically dimethylates two adjacent adenosines (A1518 and A1519) in the loop of a conserved hairpin near the 3'-end of 16S rRNA in the 30S particle. May play a critical role in biogenesis of 30S subunits. The chain is Ribosomal RNA small subunit methyltransferase A from Chlorobium limicola (strain DSM 245 / NBRC 103803 / 6330).